Reading from the N-terminus, the 461-residue chain is Proline--tRNA ligase (461 aa).

It belongs to the class-II aminoacyl-tRNA synthetase family. ProS type 3 subfamily. As to quaternary structure, homodimer.

The protein resides in the cytoplasm. It carries out the reaction tRNA(Pro) + L-proline + ATP = L-prolyl-tRNA(Pro) + AMP + diphosphate. Catalyzes the attachment of proline to tRNA(Pro) in a two-step reaction: proline is first activated by ATP to form Pro-AMP and then transferred to the acceptor end of tRNA(Pro). The protein is Proline--tRNA ligase of Methanococcus vannielii (strain ATCC 35089 / DSM 1224 / JCM 13029 / OCM 148 / SB).